Here is a 127-residue protein sequence, read N- to C-terminus: Classical arabinogalactan protein 10 (127 aa).

The first 21 residues, methionine 1–alanine 21, serve as a signal peptide directing secretion. Glutamine 22 is modified (pyrrolidone carboxylic acid). The tract at residues glutamine 22 to asparagine 107 is disordered. 4-hydroxyproline is present on residues proline 24, proline 26, proline 28, proline 32, and proline 36. Residues proline 24, proline 26, proline 28, proline 32, and proline 36 are each glycosylated (O-linked (Ara...) hydroxyproline). 3 stretches are compositionally biased toward pro residues: residues glycine 25–proline 39, serine 48–serine 58, and valine 66–serine 86. Over residues threonine 98–asparagine 107 the composition is skewed to polar residues. The GPI-anchor amidated asparagine moiety is linked to residue asparagine 107. A propeptide spans alanine 108 to leucine 127 (removed in mature form).

It belongs to the classical AGP family. O-glycosylated on hydroxyprolines; noncontiguous hydroxylproline residues are glycosylated with arabinogalactan. Predominantly expressed in flowers and at a lower level in roots and siliques.

It is found in the cell membrane. Proteoglycan that seems to be implicated in diverse developmental roles such as differentiation, cell-cell recognition, embryogenesis and programmed cell death. In Arabidopsis thaliana (Mouse-ear cress), this protein is Classical arabinogalactan protein 10 (AGP10).